A 437-amino-acid polypeptide reads, in one-letter code: Adenylyltransferase and sulfurtransferase MOCS3 (437 aa).

Residues Gly-82, Asp-103, 110–114 (TNLHR), Lys-127, and 171–172 (DN) each bind ATP. Zn(2+) contacts are provided by Cys-212 and Cys-215. Residue Cys-229 is the Glycyl thioester intermediate; for adenylyltransferase activity of the active site. Zn(2+)-binding residues include Cys-287 and Cys-290. Positions 337-435 (SNVPHLLVDV…WTHNIDPEFP (99 aa)) constitute a Rhodanese domain. Cys-391 (cysteine persulfide intermediate; for sulfurtransferase activity) is an active-site residue.

It in the N-terminal section; belongs to the HesA/MoeB/ThiF family. UBA4 subfamily. Zn(2+) is required as a cofactor.

Its subcellular location is the cytoplasm. The protein resides in the cytosol. It catalyses the reaction [molybdopterin-synthase sulfur-carrier protein]-C-terminal Gly-Gly + ATP + H(+) = [molybdopterin-synthase sulfur-carrier protein]-C-terminal Gly-Gly-AMP + diphosphate. The enzyme catalyses [molybdopterin-synthase sulfur-carrier protein]-C-terminal Gly-Gly-AMP + S-sulfanyl-L-cysteinyl-[cysteine desulfurase] + AH2 = [molybdopterin-synthase sulfur-carrier protein]-C-terminal-Gly-aminoethanethioate + L-cysteinyl-[cysteine desulfurase] + A + AMP + 2 H(+). It participates in tRNA modification; 5-methoxycarbonylmethyl-2-thiouridine-tRNA biosynthesis. The protein operates within cofactor biosynthesis; molybdopterin biosynthesis. In terms of biological role, plays a central role in 2-thiolation of mcm(5)S(2)U at tRNA wobble positions of cytosolic tRNA(Lys), tRNA(Glu) and tRNA(Gln). Also essential during biosynthesis of the molybdenum cofactor. Acts by mediating the C-terminal thiocarboxylation of sulfur carriers URM1 and MOCS2A. Its N-terminus first activates URM1 and MOCS2A as acyl-adenylates (-COAMP), then the persulfide sulfur on the catalytic cysteine is transferred to URM1 and MOCS2A to form thiocarboxylation (-COSH) of their C-terminus. The reaction probably involves hydrogen sulfide that is generated from the persulfide intermediate and that acts as a nucleophile towards URM1 and MOCS2A. Subsequently, a transient disulfide bond is formed. Does not use thiosulfate as sulfur donor; NFS1 probably acting as a sulfur donor for thiocarboxylation reactions. The protein is Adenylyltransferase and sulfurtransferase MOCS3 of Aedes aegypti (Yellowfever mosquito).